The sequence spans 246 residues: Chloroplastic group IIB intron splicing facilitator CRS2-A, chloroplastic (246 aa).

The transit peptide at 1–34 (MFCASSSPITSPLYPKAYKFSQTKSNSKRFSSLR) directs the protein to the chloroplast. Residue Tyr-64 coordinates tRNA. His-69 (proton acceptor) is an active-site residue. TRNA contacts are provided by Tyr-114, Asn-116, and Asn-162.

Belongs to the PTH family. CRS2 subfamily. In terms of assembly, part of large ribonucleo-protein complexes that include group IIB introns and either CAF1 or CAF2.

It localises to the plastid. The protein resides in the chloroplast stroma. Its function is as follows. Required for the splicing of group IIB introns in chloroplasts. In Arabidopsis thaliana (Mouse-ear cress), this protein is Chloroplastic group IIB intron splicing facilitator CRS2-A, chloroplastic (CRS2A).